The chain runs to 361 residues: Chorismate synthase (361 aa).

An NADP(+)-binding site is contributed by Arg-47. Residues 124–126 (RAS), Gly-286, 301–305 (KPTAT), and Arg-327 each bind FMN.

It belongs to the chorismate synthase family. As to quaternary structure, homotetramer. FMNH2 is required as a cofactor.

It carries out the reaction 5-O-(1-carboxyvinyl)-3-phosphoshikimate = chorismate + phosphate. It participates in metabolic intermediate biosynthesis; chorismate biosynthesis; chorismate from D-erythrose 4-phosphate and phosphoenolpyruvate: step 7/7. In terms of biological role, catalyzes the anti-1,4-elimination of the C-3 phosphate and the C-6 proR hydrogen from 5-enolpyruvylshikimate-3-phosphate (EPSP) to yield chorismate, which is the branch point compound that serves as the starting substrate for the three terminal pathways of aromatic amino acid biosynthesis. This reaction introduces a second double bond into the aromatic ring system. This chain is Chorismate synthase, found in Prochlorococcus marinus (strain NATL1A).